Here is a 591-residue protein sequence, read N- to C-terminus: Aspartate--tRNA ligase (591 aa).

Glutamate 172 is a binding site for L-aspartate. Residues 196–199 (QLFK) are aspartate. Arginine 218 contributes to the L-aspartate binding site. ATP-binding positions include 218 to 220 (RDE) and glutamine 227. An L-aspartate-binding site is contributed by histidine 449. Glutamate 483 contributes to the ATP binding site. Arginine 490 serves as a coordination point for L-aspartate. 535–538 (GLDR) is a binding site for ATP.

This sequence belongs to the class-II aminoacyl-tRNA synthetase family. Type 1 subfamily. As to quaternary structure, homodimer.

The protein localises to the cytoplasm. The enzyme catalyses tRNA(Asp) + L-aspartate + ATP = L-aspartyl-tRNA(Asp) + AMP + diphosphate. Its function is as follows. Catalyzes the attachment of L-aspartate to tRNA(Asp) in a two-step reaction: L-aspartate is first activated by ATP to form Asp-AMP and then transferred to the acceptor end of tRNA(Asp). This chain is Aspartate--tRNA ligase, found in Actinobacillus pleuropneumoniae serotype 7 (strain AP76).